The primary structure comprises 247 residues: Programmed cell death 1 ligand 2 (247 aa).

Residues 1–19 form the signal peptide; sequence MLLLLPILNLSLQLHPVAA. Topologically, residues 20–221 are extracellular; sequence LFTVTAPKEV…RMEPKVPRTW (202 aa). The Ig-like V-type domain maps to 21–118; sequence FTVTAPKEVY…AWDYKYLTVK (98 aa). Disulfide bonds link cysteine 42–cysteine 102 and cysteine 143–cysteine 192. 4 N-linked (GlcNAc...) asparagine glycosylation sites follow: asparagine 64, asparagine 157, asparagine 163, and asparagine 189. The region spanning 122 to 203 is the Ig-like C2-type domain; the sequence is SYMRIDTRIL…FWNAHMKELT (82 aa). A helical membrane pass occupies residues 222 to 242; it reads PLHVFIPACTIALIFLAIVII. The Cytoplasmic segment spans residues 243–247; sequence QRKRI.

Belongs to the immunoglobulin superfamily. BTN/MOG family. Interacts with PDCD1. As to expression, expressed in immature and mature bone marrow-derived dendritic cells and splenic dendritic cells. Highly expressed in placenta, liver and weakly expressed in heart, spleen, lymph nodes and thymus. Also expressed in some tumor cell lines of lymphoid origin.

It localises to the cell membrane. Involved in the costimulatory signal essential for T-cell proliferation and IFNG production in a PDCD1-independent manner. Interaction with PDCD1 inhibits T-cell proliferation by blocking cell cycle progression and cytokine production. The protein is Programmed cell death 1 ligand 2 (Pdcd1lg2) of Mus musculus (Mouse).